We begin with the raw amino-acid sequence, 2061 residues long: MDSEYVLCSWKGRLWPAKVLCTRGTSPKTKPEKAISLEVQILAVDEKIKVKSTDVKTPTKFEMEDIAASAAAQTKLGAPLREKMGYRGTLRVALEILKERTNLGGGRKPHELESTTPSQLSQKVPEKPASSVPREDDWRCKGDLRRSLGKRENPSSPTVPSESKRALRDDRSQEPTAIAPTPGALPGDRSGAPRAIAPTPGAMLSGRSRARRAIAPTPSALRGYRSWAHRAIAPTPGCLYSDRSRAHRAIAPARGTKHGGRSWACRSIAPKPGSLCGDRSQASRAIDPTLGARRGGRSRAHRAIAPTPGSLCGNRSRACGAIALTPGVLCGVRSRVPKDITPTPGALRGYKSWVCRAIAPTPGALRGDRSAARTAVVRTPGALGRDRSRARSAIASTPGTLQGNRSSVSKAIAPTPGALRGDRSAARTAFVPTPGALHRDRSRARSAIASTPGTLRGNTSSACKAIAPTPGALRGYKSWARRAIAPNPGAWRGYRSTTGTAIAPNLGALGGNRSAARTDIAPTPGALRGYRSWTRRAIAPTPGTLSSYRSRSRRTIASTPATLRGEKSRAHTSLAPTPGALRGDGSRARRAIVPTTCPLCEIWSRVGIGIAPIADALRRDRSPVRRAIAPTPGTLSGYRSRARTAIAPTPGTLRGYRPRSRRAIASTPATLRGEKSRAHTSLAPAPGALRGDGSRARRAIVPTTCPLCEIWSRVGIGIAPIADALRRDRPPVRRAIAPTPGALRCDRSRELTAIDPTPGALCSDRSGASRAIAPTPGTLCSERSRVRRAIAPTPCALCGKGSQVGMGVAPTPGALRRDRSQAGRAIAPTPSALFRVGSRVGTGIALPAGALHRDRSPVRRAVAPTPGTLHCDGSRKCTATGSTPGALPGDRSGVSKATAPAPGALCSERSRARRSIAPTPCLLCGDRSWVGMGIAPTPGALLGGKSRKCRAIAITPGALRGGRSQKRRVVAPTPEALHGDGSWTYMAIAPTPGALHGDSSPAHTSIIPSPGALHGDGPPAHMAFPSTPGTLHGDASHAHMAIAPTPGTMRGDSSTARTATAPSPGALRGDRSWKRKAIASTPGALHGNRSDRSRKCKAIASTPGTLHVERSPALRAIVPTPGTLGRDSSPGRTSIIPSPGALHGDRSPAHLDIASTPGALHGDSSQAHTAIAPTPGTMRGDSSTARMAIAPSAGALRGDRSWKRKAIASTPGALRGNRSDRSRKRKAIASTPGALLGNRSDRSRKHKAIAPTPGAPRIDRSPACRAIAPTPGALGDDSSTAIAPTPGTPRGDSSPANTAIASTPGALHGDTSQTHKAIAPTPGDLGGGSSSAHKAITPSPGALHGDRSPAHTAIASTPGALHGDSSQVHTTIAPTPGALRDDKSWKRKAIAPTPGTLHCDSSRTCTAFAPTPGALHADRSPAHQDITLTSGALHCDSSRESRAVAPILGALHRVGSQAHKAIASTPGPLRGDSSPFHTAIAPMPGALHGTRSWKREAISQTPFVTLCGDSSGERMAIAPTPGALHSDRSQTHTAIDPTPSVLRSDSSPACMAIDPTPGALGRDRSQALMAIAPTPVGMQAHVLQSPRACQDSLTLSRHVCEKKGKKRANASTLMSLPPTVTEEGASLPPGLTSPAPPALKEETQDSRPKKALAASPESSPFSGNIQDPGEGAWKPGWAGMAASSGSRQHRLPSSLRLANRKRKRPGPDFQRRPQGPQTPGDAKLANPVTTIQRAGGKQDGQPPSLAFPQEPHPIERGTMVWFKFQDHPFWPAVVKSVSNTDKTARVLLLEANLHHGKRGIQVPLRRLKHLDCKEKEKLLKRAQKAYKQSVNWCFSLISHYREGLVRGSFRGSFLDYYAADISYPIRRAIQEGDLQIDFPKVNYGDLEDWEEETSLGGKRPCKKILPDRMRASWDRDNQKLVDFIVRRKGADPHLLDILQGRKQSRWLTAFLKPHRDLHCIETYLEDDDQLEVVAKHLQEIYKQIDKARLTLIRDDKVNFVLEVLLPEAMICTIAALDGLDYKAAEEKYLRGPPVHYREKELFDRNILKKARREPATTHTAN.

Disordered stretches follow at residues threonine 101–arginine 211, alanine 382–valine 408, threonine 541–serine 586, proline 668–serine 694, proline 864–serine 910, proline 1046–serine 1072, alanine 1159–serine 1182, lysine 1205–lysine 1383, proline 1521–proline 1548, and lysine 1602–asparagine 1726. Composition is skewed to basic and acidic residues over residues proline 133 to asparagine 153 and glutamate 162 to glutamine 173. A compositionally biased stretch (polar residues) spans threonine 397 to valine 408. The segment covering glycine 1051–alanine 1061 has biased composition (polar residues). Residues aspartate 1364–alanine 1373 show a composition bias toward polar residues. Residues leucine 1639 to proline 1648 are compositionally biased toward basic and acidic residues. Residues proline 1656–isoleucine 1665 are compositionally biased toward polar residues. Positions arginine 1756–lysine 1817 constitute a PWWP domain.

Belongs to the PWWP3A family.

This chain is Putative PWWP domain-containing DNA repair factor 4, found in Homo sapiens (Human).